Consider the following 135-residue polypeptide: Retinol-binding protein 5 (135 aa).

It belongs to the calycin superfamily. Fatty-acid binding protein (FABP) family. Kidney.

Its subcellular location is the cytoplasm. Its function is as follows. Intracellular transport of retinol. This Bos taurus (Bovine) protein is Retinol-binding protein 5 (RBP5).